Consider the following 358-residue polypeptide: MAVEYFQEKLNKWRYSPVAGSPDEEGGNATVKPKASFVPVYAGLTIISLITVTVSLVHLLSGTGTTTTFPPCKNPAVRREWRSLTSSEKQNFTQAVICLASIPSTWQPNGTIYDDFAILHGGIGSWCHRSASFLPWHRYTLVVFEKALREHCGFTGQVPYWDWTLDWMNLANSSIFNSVDGFGGDGDRTGQEVVGGGRCVIDGPFAGLQPILYNHTYVRHCIARGFRDGDQAGRISGEYYRPESIGGILRKQSYVELVREVEIYLHNPLHQGVNGDFLAMTAANDPLFYVHHAQLDRLWWRWQQESPDLRLKEYHGKHMYNSTGNATLDDILMYGGFAEDIPVSRVMDTKGGFLCYTY.

The N-linked (GlcNAc...) asparagine glycan is linked to Asn28. A helical membrane pass occupies residues 37–57; sequence FVPVYAGLTIISLITVTVSLV. N-linked (GlcNAc...) asparagine glycosylation is found at Asn91 and Asn109. Positions 128 and 137 each coordinate Cu cation. Asn172 and Asn214 each carry an N-linked (GlcNAc...) asparagine glycan. 3 residues coordinate Cu cation: His266, His270, and His292. N-linked (GlcNAc...) asparagine glycans are attached at residues Asn321 and Asn325.

It belongs to the tyrosinase family. Requires Cu(2+) as cofactor.

Its subcellular location is the membrane. It carries out the reaction 2 L-dopa + O2 = 2 L-dopaquinone + 2 H2O. It catalyses the reaction L-tyrosine + O2 = L-dopaquinone + H2O. The protein operates within mycotoxin biosynthesis. Tyrosinase; part of the gene cluster that mediates the biosynthesis of the secondary metabolite ustiloxin B, an antimitotic tetrapeptide. First, ustA is processed by the subtilisin-like endoprotease Kex2 that is outside the ustiloxin B gene cluster, at the C-terminal side of Arg-Lys, after transfer to Golgi apparatus through the endoplasmic reticulum (ER). Cleavage by KEX2 generates 16 peptides YAIG-I to YAIG-XVI. To process the precursor peptide further, at least two peptidases are necessary to cleave the N-terminal and C-terminal sides of the Tyr-Ala-Ile-Gly core peptide which serves as backbone for the synthesis of ustiloxin B, through cyclization and modification of the tyrosine with a non-protein coding amino acid, norvaline. One of the two peptidases must be the serine peptidase ustP; and the other pepdidase is probably ustH. Macrocyclization of the core peptide derived from ustA requires the tyrosinase ustQ, as well as the homologous oxidases ustYa and ustYb, and leads to the production of the first cyclization product N-desmethylustiloxin F. For the formation of N-desmethylustiloxin F, three oxidation steps are required, hydroxylation at the benzylic position, hydroxylation at either the aromatic ring of Tyr or beta-position of Ile, and oxidative cyclization. UstQ may catalyze the oxidation of a phenol moiety, whereas the ustYa and ustYb are most likely responsible for the remaining two-step oxidations. N-desmethylustiloxin F is then methylated by ustM to yield ustiloxin F which in turn substrate of the cytochrome P450 monooxygenase ustC which catalyzes the formation of S-deoxyustiloxin H. The flavoprotein monooxygenases ustF1 and ustF2 then participate in the modification of the side chain of S-deoxyustiloxin H, leading to the synthesis of an oxime intermediate, via ustiloxin H. Finally, carboxylative dehydration performed by the cysteine desulfurase-like protein ustD yields ustiloxin B. This is Tyrosinase ustQ from Aspergillus flavus (strain ATCC 200026 / FGSC A1120 / IAM 13836 / NRRL 3357 / JCM 12722 / SRRC 167).